Here is a 206-residue protein sequence, read N- to C-terminus: Venom allergen 5 (206 aa).

4 disulfide bridges follow: C4–C16, C8–C104, C28–C96, and C172–C189. The 144-residue stretch at 48-191 (EEHNRFRQKV…MKIHYLICNY (144 aa)) folds into the SCP domain.

The protein belongs to the CRISP family. Venom allergen 5-like subfamily. As to expression, expressed by the venom gland.

The protein resides in the secreted. This is Venom allergen 5 from Polistes gallicus (Paper wasp).